The following is a 698-amino-acid chain: Elongation factor G (698 aa).

The tr-type G domain occupies 8–290 (ERYRNIGISA…AVIELLPSPT (283 aa)). GTP is bound by residues 17 to 24 (AHIDAGKT), 88 to 92 (DTPGH), and 142 to 145 (NKMD).

This sequence belongs to the TRAFAC class translation factor GTPase superfamily. Classic translation factor GTPase family. EF-G/EF-2 subfamily.

The protein localises to the cytoplasm. In terms of biological role, catalyzes the GTP-dependent ribosomal translocation step during translation elongation. During this step, the ribosome changes from the pre-translocational (PRE) to the post-translocational (POST) state as the newly formed A-site-bound peptidyl-tRNA and P-site-bound deacylated tRNA move to the P and E sites, respectively. Catalyzes the coordinated movement of the two tRNA molecules, the mRNA and conformational changes in the ribosome. The protein is Elongation factor G of Chromobacterium violaceum (strain ATCC 12472 / DSM 30191 / JCM 1249 / CCUG 213 / NBRC 12614 / NCIMB 9131 / NCTC 9757 / MK).